The sequence spans 385 residues: Lipid-A-disaccharide synthase (385 aa).

This sequence belongs to the LpxB family.

It catalyses the reaction a lipid X + a UDP-2-N,3-O-bis[(3R)-3-hydroxyacyl]-alpha-D-glucosamine = a lipid A disaccharide + UDP + H(+). The protein operates within bacterial outer membrane biogenesis; LPS lipid A biosynthesis. Condensation of UDP-2,3-diacylglucosamine and 2,3-diacylglucosamine-1-phosphate to form lipid A disaccharide, a precursor of lipid A, a phosphorylated glycolipid that anchors the lipopolysaccharide to the outer membrane of the cell. This Xylella fastidiosa (strain M23) protein is Lipid-A-disaccharide synthase.